A 109-amino-acid chain; its full sequence is Nucleoid-associated protein VP2178 (109 aa).

Disordered stretches follow at residues 1–22 (MFGKGGMGNLMKQAQQMQERMQ) and 88–109 (QKEKMASVTGGMQLPPGMKMPF).

It belongs to the YbaB/EbfC family. As to quaternary structure, homodimer.

It localises to the cytoplasm. The protein localises to the nucleoid. Functionally, binds to DNA and alters its conformation. May be involved in regulation of gene expression, nucleoid organization and DNA protection. In Vibrio parahaemolyticus serotype O3:K6 (strain RIMD 2210633), this protein is Nucleoid-associated protein VP2178.